Here is a 491-residue protein sequence, read N- to C-terminus: Probable glycine dehydrogenase (decarboxylating) subunit 2 (491 aa).

At Lys-273 the chain carries N6-(pyridoxal phosphate)lysine.

The protein belongs to the GcvP family. C-terminal subunit subfamily. As to quaternary structure, the glycine cleavage system is composed of four proteins: P, T, L and H. In this organism, the P 'protein' is a heterodimer of two subunits. Requires pyridoxal 5'-phosphate as cofactor.

The catalysed reaction is N(6)-[(R)-lipoyl]-L-lysyl-[glycine-cleavage complex H protein] + glycine + H(+) = N(6)-[(R)-S(8)-aminomethyldihydrolipoyl]-L-lysyl-[glycine-cleavage complex H protein] + CO2. In terms of biological role, the glycine cleavage system catalyzes the degradation of glycine. The P protein binds the alpha-amino group of glycine through its pyridoxal phosphate cofactor; CO(2) is released and the remaining methylamine moiety is then transferred to the lipoamide cofactor of the H protein. In Bacillus anthracis (strain A0248), this protein is Probable glycine dehydrogenase (decarboxylating) subunit 2.